We begin with the raw amino-acid sequence, 228 residues long: Protein ARV 2 (228 aa).

The next 2 helical transmembrane spans lie at 37 to 57 (EVADEYVECELLIIFIDLILH) and 80 to 100 (LLWKLVLAYLLLDTYRSLLLR). The N-linked (GlcNAc...) asparagine glycan is linked to asparagine 107. A run of 3 helical transmembrane segments spans residues 123-143 (VLSANFAFVFSFAFAAKLMLV), 150-170 (ILLTILISSYVKIFLFAMPVW), and 176-196 (VIFIVDMLVLTSNAVALKVMT).

The protein belongs to the ARV1 family. As to expression, restricted to tissues in which cells are actively dividing or expanding. Mostly expressed in roots and flowers, and, to a lower extent, in stems and leaves.

It is found in the endoplasmic reticulum membrane. Functionally, mediator of sterol homeostasis involved in sterol uptake, trafficking and distribution into membranes. Also regulates the sphingolipid metabolism. This Arabidopsis thaliana (Mouse-ear cress) protein is Protein ARV 2.